The primary structure comprises 312 residues: MPPAGELRHQSPSKEKLSSVTQSDEAEAASAAISAAAADAEAAGLWTQIKAEARRDAEAEPALASYLYSTILSHSSLERSISFHLGNKLCSSTLLSTLLYDLFLNTFSSDPSLRNATVADLRAARVRDPACISFSHCLLNYKGFLAIQAHRVSHKLWTQSRKPLALALHSRISDVFAVDIHPAAKIGKGILLDHATGVVVGETAVIGNNVSILHHVTLGGTGKACGDRHPKIGDGCLIGAGATILGNVKIGAGAKVGAGSVVLIDVPCRGTAVGNPARLVGGKEKPTIHDEECPGESMDHTSFISEWSDYII.

Basic and acidic residues predominate over residues 1–17 (MPPAGELRHQSPSKEKL). Residues 1-25 (MPPAGELRHQSPSKEKLSSVTQSDE) form a disordered region.

This sequence belongs to the transferase hexapeptide repeat family. In terms of assembly, homomultimer. Mostly expressed in stems, flowers and siliques. Localized in vascular tissues, particularly in phloem.

It is found in the cytoplasm. It carries out the reaction L-serine + acetyl-CoA = O-acetyl-L-serine + CoA. It functions in the pathway amino-acid biosynthesis; L-cysteine biosynthesis; L-cysteine from L-serine: step 1/2. Feedback inhibitions by L-Ser and acetyl-CoA. The polypeptide is Serine acetyltransferase 5 (SAT5) (Arabidopsis thaliana (Mouse-ear cress)).